A 430-amino-acid chain; its full sequence is Dihydroorotase (430 aa).

Zn(2+) contacts are provided by His-57 and His-59. Residues His-59–Arg-61 and Asn-91 contribute to the substrate site. Zn(2+)-binding residues include Asp-151, His-178, and His-231. Asn-277 provides a ligand contact to substrate. Asp-304 lines the Zn(2+) pocket. Asp-304 is a catalytic residue. Residues His-308 and Pro-322–Gly-323 contribute to the substrate site.

It belongs to the metallo-dependent hydrolases superfamily. DHOase family. Class I DHOase subfamily. Zn(2+) is required as a cofactor.

It catalyses the reaction (S)-dihydroorotate + H2O = N-carbamoyl-L-aspartate + H(+). Its pathway is pyrimidine metabolism; UMP biosynthesis via de novo pathway; (S)-dihydroorotate from bicarbonate: step 3/3. Catalyzes the reversible cyclization of carbamoyl aspartate to dihydroorotate. This chain is Dihydroorotase, found in Mycobacterium tuberculosis (strain ATCC 25618 / H37Rv).